The following is a 425-amino-acid chain: Probable threonylcarbamoyladenosine tRNA methylthiotransferase (425 aa).

The MTTase N-terminal domain maps to 2-110 (VKVYIENYGC…IVQAVEYAMR (109 aa)). Residues Cys-11, Cys-47, Cys-76, Cys-148, Cys-152, and Cys-155 each contribute to the [4Fe-4S] cluster site. One can recognise a Radical SAM core domain in the interval 134–363 (SPRNVYFILP…HRIRLQISYE (230 aa)). Residues 366-425 (RKYIGKKVKVLIHGEGKKGNVDAVTMNYKHIILPEGRKGEFREARVKNAASTYLLGEIIT) enclose the TRAM domain.

It belongs to the methylthiotransferase family. CDKAL1 subfamily. The cofactor is [4Fe-4S] cluster.

The catalysed reaction is N(6)-L-threonylcarbamoyladenosine(37) in tRNA + (sulfur carrier)-SH + AH2 + 2 S-adenosyl-L-methionine = 2-methylsulfanyl-N(6)-L-threonylcarbamoyladenosine(37) in tRNA + (sulfur carrier)-H + 5'-deoxyadenosine + L-methionine + A + S-adenosyl-L-homocysteine + 2 H(+). Its function is as follows. Catalyzes the methylthiolation of N6-threonylcarbamoyladenosine (t(6)A), leading to the formation of 2-methylthio-N6-threonylcarbamoyladenosine (ms(2)t(6)A) at position 37 in tRNAs that read codons beginning with adenine. The sequence is that of Probable threonylcarbamoyladenosine tRNA methylthiotransferase from Pyrococcus horikoshii (strain ATCC 700860 / DSM 12428 / JCM 9974 / NBRC 100139 / OT-3).